Consider the following 69-residue polypeptide: Parvalbumin beta 3 (69 aa).

Position 1 is an N-acetylalanine (A1). The region spanning 24–59 is the EF-hand domain; that stretch reads FNYKTFFKFFAIIDQDHSGFIEEEELKLFLQTFSAG. Ca(2+)-binding residues include D37, D39, S41, F43, E45, and E48.

This sequence belongs to the parvalbumin family.

Functionally, in muscle, parvalbumin is thought to be involved in relaxation after contraction. It binds two calcium ions. This chain is Parvalbumin beta 3, found in Merluccius polli (Benguela hake).